Consider the following 385-residue polypeptide: Multicilin (385 aa).

The tract at residues 1–130 (MQACGGGAAG…TVDDLISDSS (130 aa)) is necessary and sufficient for its degradation during the cell cycle. The segment at 86-111 (SSLLGSDAPPGGDLAASQNHSHQTEA) is disordered. Positions 131-385 (SMMSPTLASG…GGYKFRWVPS (255 aa)) are necessary and sufficient for proper nuclear localization. The segment at 173 to 245 (PDVPPPEQYW…SVLDKLMITQ (73 aa)) is necessary and sufficient for interaction with GMNN and sufficient for homodimerization. Positions 179-227 (EQYWKEVADQNQRALGDALVENNQLHVTLTQKQEEIASLKERNVQLKEL) form a coiled coil. The segment at 294–319 (ALQSRDPKRPRLLPEPANTDTRPGNL) is disordered.

This sequence belongs to the geminin family. As to quaternary structure, heterodimer (via coiled-coil domain) with GMNN (via coiled-coil domain); targets GMNN to the nucleus. Can form homodimers (in vitro, via coiled-coil domain), but these are much less stable than the heterodimer formed with GMNN.

The protein resides in the nucleus. In terms of biological role, transcription regulator specifically required for multiciliate cell differentiation. Acts in a multiprotein complex containing E2F4 and E2F5 that binds and activates genes required for centriole biogenesis. Required for the deuterosome-mediated acentriolar pathway. Plays a role in mitotic cell cycle progression by promoting cell cycle exit. Modulates GMNN activity by reducing its affinity for CDT1. This is Multicilin from Homo sapiens (Human).